Consider the following 99-residue polypeptide: PE family immunomodulator PE35 (99 aa).

Positions 1–90 constitute a PE domain; the sequence is MEKMSHDPIA…DVARTYSQID (90 aa).

Belongs to the mycobacterial PE family. Interacts with PPE68. PE35/PPE68 complex interacts with human TLR2.

The protein resides in the secreted. It localises to the cell surface. Functionally, plays a major role in RD1-associated pathogenesis, and may contribute to the establishment and maintenance of M.tuberculosis infection. Together with PPE68, stimulates the secretion of IL-10 and MCP-1 from human macrophages, via the interaction with human Toll-like receptor 2 (TLR2). The polypeptide is PE family immunomodulator PE35 (PE35) (Mycobacterium tuberculosis (strain ATCC 25618 / H37Rv)).